A 981-amino-acid polypeptide reads, in one-letter code: Colossin-C (981 aa).

A signal peptide spans 1 to 23 (MKILYSLLLISSIILNTVLNISS). A glycan (N-linked (GlcNAc...) asparagine) is linked at Asn-63. A disordered region spans residues 172–195 (EQTQPPTQPPTQPPTQPPTPPPFT). Positions 177-194 (PTQPPTQPPTQPPTPPPF) are enriched in pro residues. N-linked (GlcNAc...) asparagine glycans are attached at residues Asn-222, Asn-591, and Asn-811.

It belongs to the serine-aspartate repeat-containing protein (SDr) family.

The protein localises to the secreted. This chain is Colossin-C (colC), found in Dictyostelium discoideum (Social amoeba).